Consider the following 1197-residue polypeptide: ATP-dependent helicase/nuclease subunit A (1197 aa).

One can recognise a UvrD-like helicase ATP-binding domain in the interval 2–458 (KNWTTEQQAA…IDLAKNFRSR (457 aa)). 23–30 (AAAGSGKT) serves as a coordination point for ATP. One can recognise a UvrD-like helicase C-terminal domain in the interval 485 to 774 (RAALYQGASF…RIMSIHKSKG (290 aa)).

It belongs to the helicase family. AddA subfamily. As to quaternary structure, heterodimer of AddA and AddB/RexB. Requires Mg(2+) as cofactor.

The enzyme catalyses Couples ATP hydrolysis with the unwinding of duplex DNA by translocating in the 3'-5' direction.. The catalysed reaction is ATP + H2O = ADP + phosphate + H(+). Functionally, the heterodimer acts as both an ATP-dependent DNA helicase and an ATP-dependent, dual-direction single-stranded exonuclease. Recognizes the chi site generating a DNA molecule suitable for the initiation of homologous recombination. The AddA nuclease domain is required for chi fragment generation; this subunit has the helicase and 3' -&gt; 5' nuclease activities. The sequence is that of ATP-dependent helicase/nuclease subunit A from Alkaliphilus metalliredigens (strain QYMF).